The following is a 1116-amino-acid chain: Eukaryotic translation initiation factor 2-alpha kinase 3 (1116 aa).

Positions Met-1–Ala-29 are cleaved as a signal peptide. Residues Ala-30–Asp-514 lie on the Lumenal side of the membrane. The tract at residues Ala-77–Arg-101 is disordered. Asn-258 is a glycosylation site (N-linked (GlcNAc...) asparagine). Residues Pro-515–Ala-535 form a helical membrane-spanning segment. At Thr-536 to Asn-1116 the chain is on the cytoplasmic side. The segment at Arg-550–Glu-571 is disordered. Residues Phe-593–Phe-1077 enclose the Protein kinase domain. An ATP-binding site is contributed by Leu-599 to Val-607. A Phosphotyrosine; by autocatalysis modification is found at Tyr-619. Lys-622 is a binding site for ATP. An insert loop region spans residues Glu-647–Met-888. Ser-715 carries the post-translational modification Phosphoserine. The residue at position 802 (Thr-802) is a Phosphothreonine. A disordered region spans residues Lys-841 to Leu-863. Over residues Ser-844–Ser-856 the composition is skewed to low complexity. Catalysis depends on Asp-937, which acts as the Proton acceptor. The residue at position 982 (Thr-982) is a Phosphothreonine. Residues Gln-1090–Asn-1116 form a disordered region. Ser-1094 carries the post-translational modification Phosphoserine. Positions Gln-1105 to Asn-1116 are enriched in polar residues.

This sequence belongs to the protein kinase superfamily. Ser/Thr protein kinase family. GCN2 subfamily. In terms of assembly, forms dimers with HSPA5/BIP in resting cells. Homotetramerizes in response to endoplasmic reticulum (ER) stress, leading to its activation. Interacts with HSP90B1/GRP94. Interacts with DNAJC3; inhibiting EIF2AK3/PERK activity. Interacts with ATAD3A; ATAD3A and EIF2S1/eIF-2-alpha occupy a common binding site within the cytoplasmic loop of EIF2AK3/PERK, leading to prevent EIF2AK3/PERK association with its substrate EIF2S1/eIF-2-alpha. Interacts with MFN2. Interacts with TMEM33. Interacts with PDIA6. Interacts with LACC1. Oligomerization of the N-terminal ER luminal domain by ER stress promotes EIF2AK3/PERK trans-autophosphorylation of the C-terminal cytoplasmic kinase domain at multiple residues including Thr-982 on the kinase activation loop. Autophosphorylated at Tyr-619 following endoplasmic reticulum stress, leading to activate its activity. Dephosphorylated at Tyr-619 by PTPN1/PTP1B, leading to inactivate its enzyme activity. Phosphorylation at Thr-802 by AKT (AKT1, AKT2 and/or AKT3) inactivates EIF2AK3/PERK. In terms of processing, ADP-ribosylated by PARP16 upon ER stress, which increases kinase activity. In terms of tissue distribution, ubiquitous. A high level expression is seen in secretory tissues.

It localises to the endoplasmic reticulum membrane. It catalyses the reaction L-seryl-[protein] + ATP = O-phospho-L-seryl-[protein] + ADP + H(+). It carries out the reaction L-threonyl-[protein] + ATP = O-phospho-L-threonyl-[protein] + ADP + H(+). The catalysed reaction is L-tyrosyl-[protein] + ATP = O-phospho-L-tyrosyl-[protein] + ADP + H(+). Inhibited by HSPA5/BIP in absence of stress. Perturbation in protein folding in the endoplasmic reticulum (ER) promotes reversible dissociation from HSPA5/BIP and oligomerization, resulting in trans-autophosphorylation and kinase activity induction. Inactivated following phosphorylation at Thr-802 by AKT (AKT1, AKT2 and/or AKT3). Inhibited by ATAD3A at mitochondria-endoplasmic reticulum contact sites, providing a safe haven for mitochondrial protein translation during ER stress. In terms of biological role, metabolic-stress sensing protein kinase that phosphorylates the alpha subunit of eukaryotic translation initiation factor 2 (EIF2S1/eIF-2-alpha) in response to various stress, such as unfolded protein response (UPR). Key effector of the integrated stress response (ISR) to unfolded proteins: EIF2AK3/PERK specifically recognizes and binds misfolded proteins, leading to its activation and EIF2S1/eIF-2-alpha phosphorylation. EIF2S1/eIF-2-alpha phosphorylation in response to stress converts EIF2S1/eIF-2-alpha in a global protein synthesis inhibitor, leading to a global attenuation of cap-dependent translation, while concomitantly initiating the preferential translation of ISR-specific mRNAs, such as the transcriptional activators ATF4 and QRICH1, and hence allowing ATF4- and QRICH1-mediated reprogramming. The EIF2AK3/PERK-mediated unfolded protein response increases mitochondrial oxidative phosphorylation by promoting ATF4-mediated expression of COX7A2L/SCAF1, thereby increasing formation of respiratory chain supercomplexes. In contrast to most subcellular compartments, mitochondria are protected from the EIF2AK3/PERK-mediated unfolded protein response due to EIF2AK3/PERK inhibition by ATAD3A at mitochondria-endoplasmic reticulum contact sites. In addition to EIF2S1/eIF-2-alpha, also phosphorylates NFE2L2/NRF2 in response to stress, promoting release of NFE2L2/NRF2 from the BCR(KEAP1) complex, leading to nuclear accumulation and activation of NFE2L2/NRF2. Serves as a critical effector of unfolded protein response (UPR)-induced G1 growth arrest due to the loss of cyclin-D1 (CCND1). Involved in control of mitochondrial morphology and function. This Homo sapiens (Human) protein is Eukaryotic translation initiation factor 2-alpha kinase 3.